Consider the following 213-residue polypeptide: Imidazole glycerol phosphate synthase subunit HisH (213 aa).

One can recognise a Glutamine amidotransferase type-1 domain in the interval 4–213 (SIAIVDYGMG…LYRNFVHWKP (210 aa)). Residue Cys-83 is the Nucleophile of the active site. Catalysis depends on residues His-193 and Glu-195.

In terms of assembly, heterodimer of HisH and HisF.

The protein resides in the cytoplasm. It carries out the reaction 5-[(5-phospho-1-deoxy-D-ribulos-1-ylimino)methylamino]-1-(5-phospho-beta-D-ribosyl)imidazole-4-carboxamide + L-glutamine = D-erythro-1-(imidazol-4-yl)glycerol 3-phosphate + 5-amino-1-(5-phospho-beta-D-ribosyl)imidazole-4-carboxamide + L-glutamate + H(+). The catalysed reaction is L-glutamine + H2O = L-glutamate + NH4(+). It functions in the pathway amino-acid biosynthesis; L-histidine biosynthesis; L-histidine from 5-phospho-alpha-D-ribose 1-diphosphate: step 5/9. In terms of biological role, IGPS catalyzes the conversion of PRFAR and glutamine to IGP, AICAR and glutamate. The HisH subunit catalyzes the hydrolysis of glutamine to glutamate and ammonia as part of the synthesis of IGP and AICAR. The resulting ammonia molecule is channeled to the active site of HisF. The polypeptide is Imidazole glycerol phosphate synthase subunit HisH (Burkholderia lata (strain ATCC 17760 / DSM 23089 / LMG 22485 / NCIMB 9086 / R18194 / 383)).